A 274-amino-acid polypeptide reads, in one-letter code: NH(3)-dependent NAD(+) synthetase (274 aa).

46–53 is a binding site for ATP; the sequence is GISGGQDS. Asp52 lines the Mg(2+) pocket. Residue Arg140 participates in deamido-NAD(+) binding. Thr160 lines the ATP pocket. Position 165 (Glu165) interacts with Mg(2+). Deamido-NAD(+) contacts are provided by Lys173 and Asp180. Residues Lys189 and Thr211 each contribute to the ATP site. A deamido-NAD(+)-binding site is contributed by 260 to 261; that stretch reads HK.

This sequence belongs to the NAD synthetase family. Homodimer.

It catalyses the reaction deamido-NAD(+) + NH4(+) + ATP = AMP + diphosphate + NAD(+) + H(+). The protein operates within cofactor biosynthesis; NAD(+) biosynthesis; NAD(+) from deamido-NAD(+) (ammonia route): step 1/1. Its function is as follows. Catalyzes the ATP-dependent amidation of deamido-NAD to form NAD. Uses ammonia as a nitrogen source. This Streptococcus equi subsp. zooepidemicus (strain H70) protein is NH(3)-dependent NAD(+) synthetase.